The following is a 287-amino-acid chain: T-cell ecto-ADP-ribosyltransferase 1 (287 aa).

The N-terminal stretch at 1 to 20 (MPSNNFKFFLTWWLTQQVTG) is a signal peptide. Disulfide bonds link cysteine 41/cysteine 246, cysteine 80/cysteine 201, and cysteine 141/cysteine 193. The TR mART core domain maps to 61 to 241 (EELKLEWEKA…ISLDSPKRKK (181 aa)). 2 residues coordinate NAD(+): tyrosine 98 and arginine 146. Residues arginine 146 and serine 167 contribute to the active site. Asparagine 171 carries N-linked (GlcNAc...) asparagine glycosylation. NAD(+) is bound at residue serine 202. Residue glutamate 209 is part of the active site. Residue asparagine 256 is glycosylated (N-linked (GlcNAc...) asparagine). Serine 258 carries the GPI-anchor amidated serine lipid modification. The propeptide at 259–287 (SLGSRESCVSLFLVVLLGLLVQQLTLAEP) is removed in mature form.

Belongs to the Arg-specific ADP-ribosyltransferase family. Post-translationally, it is proposed that in the absence of reducing agents, a disulfide bond is formed between Cys-80 and Cys-201, leading to a conformational change that reduces the catalytic rate of NAD glycohydrolysis. As to expression, expressed in spleen, intestine and thymus.

Its subcellular location is the cell membrane. The catalysed reaction is L-arginyl-[protein] + NAD(+) = N(omega)-(ADP-D-ribosyl)-L-arginyl-[protein] + nicotinamide + H(+). The enzyme catalyses NAD(+) + H2O = ADP-D-ribose + nicotinamide + H(+). Functionally, has both ADP-ribosyltransferase activity and thiol-dependent NAD(+) glycohydrolase activity. The sequence is that of T-cell ecto-ADP-ribosyltransferase 1 (Art2a) from Mus musculus (Mouse).